A 343-amino-acid chain; its full sequence is Heat-inducible transcription repressor HrcA (343 aa).

This sequence belongs to the HrcA family.

Negative regulator of class I heat shock genes (grpE-dnaK-dnaJ and groELS operons). Prevents heat-shock induction of these operons. The sequence is that of Heat-inducible transcription repressor HrcA from Halalkalibacterium halodurans (strain ATCC BAA-125 / DSM 18197 / FERM 7344 / JCM 9153 / C-125) (Bacillus halodurans).